A 1835-amino-acid chain; its full sequence is MILKSFLLGNLLSLCMKIINSVVGVGLYYGFLTTFSIGPSYLFLLRARVMEEGTEKEVSATTGFITGQLMMFISIYYAPLHLALDRPHTITVLVLPYLLFHFFWNNHKHFFDYGSTTRNSMRNLSIQCVFLNNLIFQLFNHFILPSSTLARLVNIYMFRCNNKMLFVTSSFVGWLIGHIFFMKWVGLVLFWIRQNHSIRSNVLIRSNKYLVSELRNSMARIFSILLFITCVYYLGRIPSPIVTKKLKETSETEERGESAEETDVEIETTSETKGTKQEQEASTEEDPSLCSEEKEDPDKLDGNQGYQENWKLEILKDKDLFWFEKPLVTLLFDYKRWNRPLRYIKNDRFEKTVRNEMSQYFFHTCPSDGKKRISFTYPPSLSTFGEIIQRKMSLYTTDKLLSPEDPYNHWVYTNEQKRHNLSNEFINRIEALDRGTLTLDVLEKSTRLCNNENEQEFFPKIYDPFLNGPYRGTTKKVYSRSIMDDSITWTEDSIEMVWINKIHDIFPNDYREFEQKMDLFNGESLSTDIGHSLTSINKFAGESAPNLNLKGLALLAEQRRLDSENQTKCLKFLSDVVTTDPNDQTIQNKYIGIEEIGKKVPRWSYKLTDHLEEQEKENEEESTEDHGIRSRKAKRVVIYTDNDQNTNTYTSTSTNSDQAEELALIRYSQQSDFRRDLIKGSMRAQRRKTVTWEMFQANVHSPLFLDRIDKTFFFSFDISGMMNLIFRNWVGKGPEFKTSDSEEKEAKEKEKTKEEKKEENERIAIAETWDTIIFAQAIRGSMLVTQSILRKYIVLPSLIIAKNLGRMLLFQFPEWYEDWKEWNREMHVKCTYNGVQLSETEFPKDWLTDGIQIKILFPFCLKPWHRSKLRSHHRDRMKKKGKKENFCFLTVWGMETELPFGSSRKRPSFFEPICKELEKKIRKVKKKCFLVLRALGERTKWFLRVLKEKTRWILKTVLFIKRIIKEFAKVNPILLFGLRKVYEPNENRKDSITNNKINHESIIRIRSVDWTNYSLTEKKMKDLADRTTTIRNKIERITKDKRKIFLTPDIKISPNETGCDDKRSESQKHIWQISKRRSARLIRKWHYFMKSFIERIYMDIFLCTINIPRRNAHLFLESTKKIIDKDIYNDERNKEGIDETNQNAIHFISTIKKSLSNISNNKSQIYCDLSSLSQAYVFYNLLQIQVINKYYLRFVLQYRGAYLFLKDRIKDHFGTRGILDAKSRPKKPPNSGMNEWKNWLRGHYQYNLSQTRWSRLVPQKWRNRVNQRRTIQNKDSKKDSYEKDQFIHYEKQNNYVVNSLPNKKEKFKKHYRYDLLSHKYIHYEDRKDSYIYGSPLQVNVNGDREIPYNYNTPKPESFYVPRGIAISDYLGEESIIDTGKNPDRKYLEWRILNFFLRKNIDIETWIDIDTGTNINKNAKTGTNDYQIIDKKDLFYLPIHQEINPSNQKQGFFFDWMGMNEEMLYRPISNLEPWFFSEFVLLYDAYKIKPWIIPIKLLIFNLNGNENISENKNINRNQKKDLRLSSNQKEYLELENRNQEEKEQLGQGNLGSDPRNRQKDLEKDYAESDIKKRRKKRQSKSNKEAELNFFLKRYLLFQLRWDDPLNQRMINNIKVYCLLLRLINPKEIAISSIQRGEMRLDVMLIQKDLTLTELIKRGILIIEPVRLSIKWDGQWIMYQTIGISLVHKNKYQTNRICREKKYVDENSFDRSIAQHGKVLVNGDENNYALLVPENIPSPRRRRELRILICLNSENGNVVDRNSVFFNGNNVRNCVQFLDEDKHFDTDINKFIQFKLFLCPNYRLEDLACMNRYWFDTNNGSRFSMSRIHMYPRFRIS.

Transmembrane regions (helical) follow at residues 25–45, 64–84, 87–107, 124–144, 172–192, and 221–241; these read VGLY…LFLL, FITG…HLAL, PHTI…WNNH, LSIQ…HFIL, VGWL…LFWI, and IFSI…PSPI. The segment covering 246–258 has biased composition (basic and acidic residues); that stretch reads LKETSETEERGES. Disordered regions lie at residues 246–304, 735–759, and 1535–1578; these read LKET…DGNQ, EFKT…KKEE, and NRNQ…KRQS. A compositionally biased stretch (acidic residues) spans 259 to 268; sequence AEETDVEIET. The segment covering 1553–1569 has biased composition (basic and acidic residues); it reads PRNRQKDLEKDYAESDI.

It belongs to the TIC214 family. Part of the Tic complex.

It localises to the plastid. It is found in the chloroplast inner membrane. Functionally, involved in protein precursor import into chloroplasts. May be part of an intermediate translocation complex acting as a protein-conducting channel at the inner envelope. The polypeptide is Protein TIC 214 (Liriodendron tulipifera (Tuliptree)).